The chain runs to 198 residues: Na(+)-translocating NADH-quinone reductase subunit E (198 aa).

A run of 6 helical transmembrane segments spans residues 11–31, 35–55, 77–97, 110–130, 140–160, and 176–196; these read AVFVENMALAFFLGMCTFLAV, VSTASGLGVAVTVVLGLAVPI, FLNFITFIGVIAALVQILEMI, GIFLPLIAVNCAIFGGVSFMV, IVYGFGSGIGWMLAIVAMAGI, and LGITFITTGLMALGFMSFSGV.

The protein belongs to the NqrDE/RnfAE family. As to quaternary structure, composed of six subunits; NqrA, NqrB, NqrC, NqrD, NqrE and NqrF.

Its subcellular location is the cell inner membrane. The catalysed reaction is a ubiquinone + n Na(+)(in) + NADH + H(+) = a ubiquinol + n Na(+)(out) + NAD(+). Its function is as follows. NQR complex catalyzes the reduction of ubiquinone-1 to ubiquinol by two successive reactions, coupled with the transport of Na(+) ions from the cytoplasm to the periplasm. NqrA to NqrE are probably involved in the second step, the conversion of ubisemiquinone to ubiquinol. The protein is Na(+)-translocating NADH-quinone reductase subunit E of Klebsiella pneumoniae subsp. pneumoniae (strain ATCC 700721 / MGH 78578).